The primary structure comprises 142 residues: MKTFVAKPETVKRDWYVVDAEGKTLGRLATEIASRLRGKHKAEFTPHVDTGDYIVVINAEKITVTGNKAAAKTYYSYSGFPGGLKSITFDKLIVRKPEMILEIAVKGMLPKGPLGRAMLRKLKVYAGTEHNHAAQQPQVLDI.

The protein belongs to the universal ribosomal protein uL13 family. Part of the 50S ribosomal subunit.

Its function is as follows. This protein is one of the early assembly proteins of the 50S ribosomal subunit, although it is not seen to bind rRNA by itself. It is important during the early stages of 50S assembly. This is Large ribosomal subunit protein uL13 from Tolumonas auensis (strain DSM 9187 / NBRC 110442 / TA 4).